A 306-amino-acid chain; its full sequence is Aspartate carbamoyltransferase catalytic subunit (306 aa).

Carbamoyl phosphate-binding residues include Arg54 and Thr55. An L-aspartate-binding site is contributed by Lys83. Arg104, His132, and Gln135 together coordinate carbamoyl phosphate. L-aspartate contacts are provided by Arg165 and Arg227. Carbamoyl phosphate-binding residues include Leu266 and Pro267.

This sequence belongs to the aspartate/ornithine carbamoyltransferase superfamily. ATCase family. Heterododecamer (2C3:3R2) of six catalytic PyrB chains organized as two trimers (C3), and six regulatory PyrI chains organized as three dimers (R2).

It carries out the reaction carbamoyl phosphate + L-aspartate = N-carbamoyl-L-aspartate + phosphate + H(+). It functions in the pathway pyrimidine metabolism; UMP biosynthesis via de novo pathway; (S)-dihydroorotate from bicarbonate: step 2/3. Its function is as follows. Catalyzes the condensation of carbamoyl phosphate and aspartate to form carbamoyl aspartate and inorganic phosphate, the committed step in the de novo pyrimidine nucleotide biosynthesis pathway. The polypeptide is Aspartate carbamoyltransferase catalytic subunit (Clostridium kluyveri (strain NBRC 12016)).